Here is a 182-residue protein sequence, read N- to C-terminus: Peptidyl-tRNA hydrolase (182 aa).

Residue Tyr-14 coordinates tRNA. The active-site Proton acceptor is the His-19. TRNA is bound by residues Phe-64, Asn-66, and Asn-112.

Belongs to the PTH family. Monomer.

The protein localises to the cytoplasm. The catalysed reaction is an N-acyl-L-alpha-aminoacyl-tRNA + H2O = an N-acyl-L-amino acid + a tRNA + H(+). Its function is as follows. Hydrolyzes ribosome-free peptidyl-tRNAs (with 1 or more amino acids incorporated), which drop off the ribosome during protein synthesis, or as a result of ribosome stalling. Catalyzes the release of premature peptidyl moieties from peptidyl-tRNA molecules trapped in stalled 50S ribosomal subunits, and thus maintains levels of free tRNAs and 50S ribosomes. The sequence is that of Peptidyl-tRNA hydrolase from Wolbachia pipientis wMel.